Consider the following 599-residue polypeptide: Group II intron-encoded protein LtrA (599 aa).

In terms of domain architecture, Reverse transcriptase spans 70–361 (IIQSLKDGTY…QPARFLGYDI (292 aa)). Residues 381-549 (NGSVELLIPL…AKCCELCGTS (169 aa)) are intron maturase type-2.

This sequence in the N-terminal section; belongs to the bacterial reverse transcriptase family. As to quaternary structure, homodimer. Requires Mg(2+) as cofactor.

The catalysed reaction is DNA(n) + a 2'-deoxyribonucleoside 5'-triphosphate = DNA(n+1) + diphosphate. Functionally, multifunctional protein that promotes group II intron splicing and mobility by acting both on RNA and DNA. It has three activities: reverse transcriptase (RT) for intron duplication, maturase to promote splicing, and DNA endonuclease for site-specific cleavage of recipient alleles. The intron-encoded protein promotes splicing by facilitating the formation of the catalytically active structure of the intron RNA. After splicing, the protein remains bound to the excised intron lariat RNA, forming ribonucleoprotein particles, and cleaving the antisense strand of the recipient DNA in the 3' exon. After DNA cleavage, retrohoming occurs by a target DNA-primed reverse transcription of the intron RNA that had reverse spliced into the sense strand of the recipient DNA. It also contributes to the recognition of the DNA target site and acts as a repressor of its own translation. The protein is Group II intron-encoded protein LtrA (ltrA) of Lactococcus lactis subsp. cremoris (Streptococcus cremoris).